A 193-amino-acid chain; its full sequence is Probable DNA-directed RNA polymerase subunit delta (193 aa).

The region spanning 14–81 (LALVEIATAI…GNNEWGLRAW (68 aa)) is the HTH HARE-type domain. Composition is skewed to acidic residues over residues 119-174 (DDDV…DDNL) and 182-193 (DLDDLSDGDIEK). The tract at residues 119 to 193 (DDDVIDYNDD…DDLSDGDIEK (75 aa)) is disordered.

The protein belongs to the RpoE family. As to quaternary structure, RNAP is composed of a core of 2 alpha, a beta and a beta' subunits. The core is associated with a delta subunit and one of several sigma factors.

Participates in both the initiation and recycling phases of transcription. In the presence of the delta subunit, RNAP displays an increased specificity of transcription, a decreased affinity for nucleic acids, and an increased efficiency of RNA synthesis because of enhanced recycling. The sequence is that of Probable DNA-directed RNA polymerase subunit delta from Leuconostoc citreum (strain KM20).